The chain runs to 537 residues: MAQKPLRLLACGDVEGKFDVLFNRVRTIQKKSGNFDLLLCVGNFFGSAQDAEWEEYKTGNKKAPIQTYVLGANNEETANYFQGADGCELAENITYLGRKGVFTGSSGLQIVYLSGTESLDEPVPAHSFSPKDVSSLRTMLCSASQFKGVDILLTSPWPKYVGSFGNSSGEVDTKNCGSALISSLAVSLKPRYHFAALEKSYYERLPYRNHVVLQESAQHATRFIALANVGNPEKKKYLYAFSIVPMKLMAVAELVKQPPDVTENPYRDSGKQAAGGKHIPAPQEESACQFFFDLSEKQGRKRPSTGRDTRPPHAKQPRKPPQPPGPCWFCLASPEVEKHLVVNIGTHCYLALAKGGLSDDHVLILPIGHYQSVVELSAEVVEEVEKYKATLQRFFKSRGKRCVLFERNYRSHHLQLQVIPVPLSCCATDDIKDAFITQAQEQQIELLEIPEHSDIKQIAQPGAAYFYVELDTGEKLFHRIKKNFPLQFGREVLASEAILNIPEKADWRQCQTSKDEEEALARRFRKDFEPFDFTLDD.

The disordered stretch occupies residues 297–323; that stretch reads KQGRKRPSTGRDTRPPHAKQPRKPPQP.

Belongs to the CWF19 family.

The protein is CWF19-like protein 1 (Cwf19l1) of Mus musculus (Mouse).